Here is a 143-residue protein sequence, read N- to C-terminus: Large-conductance mechanosensitive channel (143 aa).

Helical transmembrane passes span 19-39 and 81-101; these read VGVI…ADVI and GSFL…FLVV.

Belongs to the MscL family. As to quaternary structure, homopentamer.

The protein resides in the cell inner membrane. In terms of biological role, channel that opens in response to stretch forces in the membrane lipid bilayer. May participate in the regulation of osmotic pressure changes within the cell. This is Large-conductance mechanosensitive channel from Rhodopseudomonas palustris (strain HaA2).